The primary structure comprises 393 residues: Aspartate aminotransferase (393 aa).

Residues glycine 38, tryptophan 124, and asparagine 174 each coordinate L-aspartate. N6-(pyridoxal phosphate)lysine is present on lysine 237.

Belongs to the class-I pyridoxal-phosphate-dependent aminotransferase family. As to quaternary structure, homodimer. The cofactor is pyridoxal 5'-phosphate.

It is found in the cytoplasm. The enzyme catalyses L-aspartate + 2-oxoglutarate = oxaloacetate + L-glutamate. This is Aspartate aminotransferase (aspB) from Bacillus subtilis (strain 168).